The chain runs to 374 residues: MYLANFELKDFRNFEELKINFDPHVNIFIGPNAQGKTNLLEAIYFLALTRSHRTNSDKELIRFGSKFAGLQGKVHKSQLEVELKLRLTPNGKKAWVNRLEQKKLSAYVGQMNAILFSPEDLALVKGAPSIRRRFMDLEFGQINSEYLYFLSQYRQVLQQRNNYLKQLSIKKANDLVFLDVLSDQLAGIAAEIISRRIKYIKKLNSYAQSAHSEISGQAEKLQIFYRPSVKEITPDDDVETIYQKVITSYKKNRPNEIRKGTTLSGPHRDDLDFLINDKNAHDFASQGQQRTISLSVKLAEIQLVHELTQEYPILLLDDVMSELDHRRQSSLLNYIHGKTQTFITTTDLEGISWEIVKEPKVYHISAGTISTKES.

30–37 is a binding site for ATP; that stretch reads GPNAQGKT.

The protein belongs to the RecF family.

Its subcellular location is the cytoplasm. Its function is as follows. The RecF protein is involved in DNA metabolism; it is required for DNA replication and normal SOS inducibility. RecF binds preferentially to single-stranded, linear DNA. It also seems to bind ATP. This is DNA replication and repair protein RecF from Lactobacillus johnsonii (strain CNCM I-12250 / La1 / NCC 533).